Here is a 410-residue protein sequence, read N- to C-terminus: NIPA-like protein 3 (410 aa).

Positions 1–24 (MDGAHSAGLQLQPLPPTSGATSTS) are disordered. The next 9 membrane-spanning stretches (helical) occupy residues 37–57 (NLIGALLAIFGHLVVSIALNL), 80–100 (WWLGLLLLLLGELGVFASYAF), 105–125 (LIVPLSAVSVIASAIIGIIFI), 139–159 (VLSFVGCGLAIVGTYLLVTFA), 175–195 (LVSWPFLLYMLVAIVLFCLLL), 206–226 (IVVILLLVALLGSMTVVTVKA), 244–264 (PIFYVMFVCMVATAIYQATFL), 275–295 (LIASVGYILSTTAAITAGAIF), and 304–324 (ALHICMFALGCLIAFLGVFLI). Phosphoserine is present on Ser376. Residues 389 to 410 (EEHSSRSTPGVPYRVLEHTKKE) are disordered.

Belongs to the NIPA family.

The protein localises to the membrane. This chain is NIPA-like protein 3 (Nipal3), found in Mus musculus (Mouse).